The sequence spans 264 residues: tRNA-uridine aminocarboxypropyltransferase A (264 aa).

Positions 25, 28, 35, and 37 each coordinate Zn(2+). A DXTW motif is present at residues 144–147 (DATW). Residues 245–264 (RPKLLKKRFQNQQPLEQEEE) are disordered. Over residues 254-264 (QNQQPLEQEEE) the composition is skewed to polar residues.

It belongs to the TDD superfamily. DTWD2 family.

It catalyses the reaction a uridine in tRNA + S-adenosyl-L-methionine = a 3-[(3S)-3-amino-3-carboxypropyl]uridine in tRNA + S-methyl-5'-thioadenosine + H(+). Its function is as follows. Catalyzes the formation of 3-(3-amino-3-carboxypropyl)uridine (acp3U) at position 20a in the D-loop of several cytoplasmic tRNAs (acp3U(20a)). The chain is tRNA-uridine aminocarboxypropyltransferase A from Arabidopsis thaliana (Mouse-ear cress).